A 292-amino-acid polypeptide reads, in one-letter code: Phosphatidylserine decarboxylase proenzyme (292 aa).

Active-site charge relay system; for autoendoproteolytic cleavage activity residues include Asp-92, His-149, and Ser-255. Catalysis depends on Ser-255, which acts as the Schiff-base intermediate with substrate; via pyruvic acid; for decarboxylase activity. Pyruvic acid (Ser); by autocatalysis is present on Ser-255.

This sequence belongs to the phosphatidylserine decarboxylase family. PSD-B subfamily. Prokaryotic type I sub-subfamily. As to quaternary structure, heterodimer of a large membrane-associated beta subunit and a small pyruvoyl-containing alpha subunit. Pyruvate serves as cofactor. Post-translationally, is synthesized initially as an inactive proenzyme. Formation of the active enzyme involves a self-maturation process in which the active site pyruvoyl group is generated from an internal serine residue via an autocatalytic post-translational modification. Two non-identical subunits are generated from the proenzyme in this reaction, and the pyruvate is formed at the N-terminus of the alpha chain, which is derived from the carboxyl end of the proenzyme. The autoendoproteolytic cleavage occurs by a canonical serine protease mechanism, in which the side chain hydroxyl group of the serine supplies its oxygen atom to form the C-terminus of the beta chain, while the remainder of the serine residue undergoes an oxidative deamination to produce ammonia and the pyruvoyl prosthetic group on the alpha chain. During this reaction, the Ser that is part of the protease active site of the proenzyme becomes the pyruvoyl prosthetic group, which constitutes an essential element of the active site of the mature decarboxylase.

It localises to the cell membrane. It catalyses the reaction a 1,2-diacyl-sn-glycero-3-phospho-L-serine + H(+) = a 1,2-diacyl-sn-glycero-3-phosphoethanolamine + CO2. The protein operates within phospholipid metabolism; phosphatidylethanolamine biosynthesis; phosphatidylethanolamine from CDP-diacylglycerol: step 2/2. Functionally, catalyzes the formation of phosphatidylethanolamine (PtdEtn) from phosphatidylserine (PtdSer). In Idiomarina loihiensis (strain ATCC BAA-735 / DSM 15497 / L2-TR), this protein is Phosphatidylserine decarboxylase proenzyme.